The sequence spans 417 residues: Aromatic-amino-acid aminotransferase 1 (417 aa).

An N6-(pyridoxal phosphate)lysine modification is found at lysine 258.

This sequence belongs to the class-I pyridoxal-phosphate-dependent aminotransferase family. As to quaternary structure, homodimer. Pyridoxal 5'-phosphate serves as cofactor.

It catalyses the reaction an aromatic L-alpha-amino acid + 2-oxoglutarate = an aromatic oxo-acid + L-glutamate. Catalyzes the transamination of phenylalanine, tyrosine and tryptophan. Shows virtually no activity towards aspartic acid, alanine, valine or isoleucine. This chain is Aromatic-amino-acid aminotransferase 1, found in Thermococcus litoralis (strain ATCC 51850 / DSM 5473 / JCM 8560 / NS-C).